Consider the following 248-residue polypeptide: 5'-nucleotidase SurE (248 aa).

A divalent metal cation is bound by residues Asp8, Asp9, Ser39, and Asn91.

Belongs to the SurE nucleotidase family. The cofactor is a divalent metal cation.

The protein resides in the cytoplasm. The enzyme catalyses a ribonucleoside 5'-phosphate + H2O = a ribonucleoside + phosphate. In terms of biological role, nucleotidase that shows phosphatase activity on nucleoside 5'-monophosphates. The sequence is that of 5'-nucleotidase SurE from Geobacter sp. (strain M21).